The primary structure comprises 292 residues: Large ribosomal subunit protein bL19m (292 aa).

Positions 41 to 60 are disordered; sequence SRFQSTGPSEPGGFKPPPKP. A Phosphoserine modification is found at Ser-77.

This sequence belongs to the bacterial ribosomal protein bL19 family. Component of the mitochondrial ribosome large subunit (39S) which comprises a 16S rRNA and about 50 distinct proteins.

The protein localises to the mitochondrion. This Mus musculus (Mouse) protein is Large ribosomal subunit protein bL19m (Mrpl19).